The primary structure comprises 533 residues: MEIRNIKEFEKASKKLQKDTLKIALALLFLIGAALLALIFGQANSKGLLLIFAAVIGGYMAMNIGANDVSNNVGPAVGSKAISMGGAILIAAVCEMLGAIIAGGEVVSTIKGRIVSPEFINDAHVFINVMLASLLSGALWLHVATLIGAPVSTSHSVVGGIMGAGMAAAGMSAINWHFLSGIVASWVISPLMGALIAMFFLMLIKKTIAYKEDKKSAALKVVPYLVALMSLAFSWYLIVKVLKRLYAVGFEIQLACGCVLALLIFILFKRFVLKKAPQLENSHESVNELFNVPLIFAAALLSFAHGANDVANAIGPLAAISQTLEDASSPMGSTLNSVPLWIMVVGAAGIALGLSLYGPKLIKTVGSEITELDKMQAFCIALSAVITVLLASQLGLPVSSTHIVVGAVFGVGFLRERLREQSRRRFARIRDNIVAAHFGEDLEEIEGFLERFDKANLKEKSLMLESLKKSKNTAIALELKKKEKKSLKKVYKEEVIKRSILKKIVTAWLVTVPVSALLGALLFVALGFIEKYF.

12 helical membrane-spanning segments follow: residues 23–43 (IALALLFLIGAALLALIFGQA), 47–67 (GLLLIFAAVIGGYMAMNIGAN), 81–101 (AISMGGAILIAAVCEMLGAII), 129–149 (VMLASLLSGALWLHVATLIGA), 156–176 (SVVGGIMGAGMAAAGMSAINW), 182–202 (IVASWVISPLMGALIAMFFLM), 221–241 (VVPYLVALMSLAFSWYLIVKV), 248–268 (VGFEIQLACGCVLALLIFILF), 286–306 (VNELFNVPLIFAAALLSFAHG), 338–358 (VPLWIMVVGAAGIALGLSLYG), 372–392 (LDKMQAFCIALSAVITVLLAS), and 509–529 (LVTVPVSALLGALLFVALGFI).

The protein belongs to the inorganic phosphate transporter (PiT) (TC 2.A.20) family.

The protein localises to the cell membrane. Functionally, potential transporter for phosphate. The chain is Putative phosphate permease jhp_1384 from Helicobacter pylori (strain J99 / ATCC 700824) (Campylobacter pylori J99).